The chain runs to 343 residues: L-threonine 3-dehydrogenase (343 aa).

Cys-38 contributes to the Zn(2+) binding site. Catalysis depends on charge relay system residues Thr-40 and His-43. Zn(2+) contacts are provided by His-63, Glu-64, Cys-93, Cys-96, Cys-99, and Cys-107. Residues Ile-175, Asp-195, Arg-200, 262–264 (LGI), and 286–287 (IY) contribute to the NAD(+) site.

The protein belongs to the zinc-containing alcohol dehydrogenase family. As to quaternary structure, homotetramer. Zn(2+) serves as cofactor.

Its subcellular location is the cytoplasm. It carries out the reaction L-threonine + NAD(+) = (2S)-2-amino-3-oxobutanoate + NADH + H(+). It participates in amino-acid degradation; L-threonine degradation via oxydo-reductase pathway; glycine from L-threonine: step 1/2. Functionally, catalyzes the NAD(+)-dependent oxidation of L-threonine to 2-amino-3-ketobutyrate. This is L-threonine 3-dehydrogenase from Burkholderia mallei (strain NCTC 10247).